A 172-amino-acid polypeptide reads, in one-letter code: MSKEKDVYLNEEIRASEVRCVGDDGTAYGVISRGEAQDIANRMGLDLVLIAPDAKPPVCKIMDYGKFRYQQEKKQKEAKKKQKVIEVKEIKLSVKIAQNDINYKIKHAQEFLEEGKHVKFRVFLKGREMATPDIGVVMLERIWELVKDYADRDKVPALEGRYVNMLVTPKKG.

The protein belongs to the IF-3 family. As to quaternary structure, monomer.

Its subcellular location is the cytoplasm. Its function is as follows. IF-3 binds to the 30S ribosomal subunit and shifts the equilibrium between 70S ribosomes and their 50S and 30S subunits in favor of the free subunits, thus enhancing the availability of 30S subunits on which protein synthesis initiation begins. In Campylobacter fetus subsp. fetus (strain 82-40), this protein is Translation initiation factor IF-3.